The following is a 118-amino-acid chain: Large ribosomal subunit protein bL19 (118 aa).

It belongs to the bacterial ribosomal protein bL19 family.

Its function is as follows. This protein is located at the 30S-50S ribosomal subunit interface and may play a role in the structure and function of the aminoacyl-tRNA binding site. This chain is Large ribosomal subunit protein bL19, found in Helicobacter pylori (strain G27).